We begin with the raw amino-acid sequence, 578 residues long: Longifolene synthase (578 aa).

Mg(2+) contacts are provided by Asp331, Asp335, and Asp475. The DDXXD motif motif lies at 331–335 (DDLYD).

Belongs to the terpene synthase family. Tpsd subfamily. Mg(2+) is required as a cofactor. Mn(2+) serves as cofactor.

The protein localises to the cytoplasm. The catalysed reaction is (2E,6E)-farnesyl diphosphate = longifolene + diphosphate. Its pathway is sesquiterpene biosynthesis. It functions in the pathway terpene metabolism; oleoresin biosynthesis. Functionally, involved in defensive oleoresin formation in conifers in response to insect attack or other injury. Involved in sesquiterpene (C15) olefins biosynthesis. Produces mainly longifolene, but also multiple minor products including alpha-longipinene, alpha-longicyclene, E-beta-farnesene, longiborneol, cyclosativene, beta-longipinene, and 12 other sesquiterpenes when used with farnesyl diphosphate (FPP) as substrate. In Picea abies (Norway spruce), this protein is Longifolene synthase (TPS-Lon).